A 112-amino-acid polypeptide reads, in one-letter code: MIAYFGKCLLLVTIMFLGVLFGMQQANHGMLSMKGYHDPSLKGAFTLTDGKDNEKEASILGETVTAKDLVEKQKELEKVETFNMFSKAGKALSDTVTNTAQSMYEWIRDMNQ.

This is an uncharacterized protein from Bacillus subtilis (strain 168).